The sequence spans 355 residues: S-adenosylmethionine:tRNA ribosyltransferase-isomerase (355 aa).

The protein belongs to the QueA family. As to quaternary structure, monomer.

It is found in the cytoplasm. The enzyme catalyses 7-aminomethyl-7-carbaguanosine(34) in tRNA + S-adenosyl-L-methionine = epoxyqueuosine(34) in tRNA + adenine + L-methionine + 2 H(+). It participates in tRNA modification; tRNA-queuosine biosynthesis. Its function is as follows. Transfers and isomerizes the ribose moiety from AdoMet to the 7-aminomethyl group of 7-deazaguanine (preQ1-tRNA) to give epoxyqueuosine (oQ-tRNA). This is S-adenosylmethionine:tRNA ribosyltransferase-isomerase from Burkholderia cenocepacia (strain ATCC BAA-245 / DSM 16553 / LMG 16656 / NCTC 13227 / J2315 / CF5610) (Burkholderia cepacia (strain J2315)).